The primary structure comprises 557 residues: Potassium-transporting ATPase potassium-binding subunit (557 aa).

Transmembrane regions (helical) follow at residues 5 to 25 (GFLL…PLGS), 63 to 83 (LSAI…MLLG), 132 to 152 (GLTV…FAFI), 170 to 190 (LLRI…LFFI), 253 to 273 (FVQM…FGEV), 283 to 303 (LLWA…WAEV), 329 to 349 (VLVS…AVIA), 356 to 376 (ALGG…FGGV), 379 to 399 (GLYG…LMIG), 416 to 436 (LTAL…ALAM), 484 to 504 (LLAF…MAIA), and 526 to 546 (LFVG…FIPA).

Belongs to the KdpA family. The system is composed of three essential subunits: KdpA, KdpB and KdpC.

The protein resides in the cell inner membrane. Part of the high-affinity ATP-driven potassium transport (or Kdp) system, which catalyzes the hydrolysis of ATP coupled with the electrogenic transport of potassium into the cytoplasm. This subunit binds the periplasmic potassium ions and delivers the ions to the membrane domain of KdpB through an intramembrane tunnel. The polypeptide is Potassium-transporting ATPase potassium-binding subunit (Escherichia coli (strain SMS-3-5 / SECEC)).